A 634-amino-acid chain; its full sequence is Threonine--tRNA ligase (634 aa).

The TGS domain maps to 1-61 (MINITLPDGS…DHDASLRIIT (61 aa)). The segment at 243 to 534 (DHRRIGKAQD…LIEHHAGAFP (292 aa)) is catalytic. Zn(2+) is bound by residues Cys334, His385, and His511.

It belongs to the class-II aminoacyl-tRNA synthetase family. Homodimer. The cofactor is Zn(2+).

It localises to the cytoplasm. The catalysed reaction is tRNA(Thr) + L-threonine + ATP = L-threonyl-tRNA(Thr) + AMP + diphosphate + H(+). Its function is as follows. Catalyzes the attachment of threonine to tRNA(Thr) in a two-step reaction: L-threonine is first activated by ATP to form Thr-AMP and then transferred to the acceptor end of tRNA(Thr). Also edits incorrectly charged L-seryl-tRNA(Thr). The chain is Threonine--tRNA ligase from Xanthomonas oryzae pv. oryzae (strain MAFF 311018).